A 269-amino-acid polypeptide reads, in one-letter code: Chymotrypsin-like elastase family member 3B (269 aa).

Residues Met-1–Gly-16 form the signal peptide. A propeptide spans Cys-17–Arg-27 (activation peptide). The Peptidase S1 domain occupies Val-28 to Ala-267. A disulfide bridge links Cys-57 with Cys-73. Active-site charge relay system residues include His-72 and Asp-122. 3 cysteine pairs are disulfide-bonded: Cys-156–Cys-222, Cys-187–Cys-203, and Cys-212–Cys-243. Ser-216 acts as the Charge relay system in catalysis.

It belongs to the peptidase S1 family. Elastase subfamily.

The enzyme catalyses Preferential cleavage: Ala-|-Xaa. Does not hydrolyze elastin.. In terms of biological role, efficient protease with alanine specificity but only little elastolytic activity. The protein is Chymotrypsin-like elastase family member 3B (Cela3b) of Mus musculus (Mouse).